We begin with the raw amino-acid sequence, 205 residues long: Large ribosomal subunit protein bL25 (205 aa).

The tract at residues 184–205 (QPAGAVSEAAEGGEAAGETPAA) is disordered. Residues 186 to 205 (AGAVSEAAEGGEAAGETPAA) are compositionally biased toward low complexity.

This sequence belongs to the bacterial ribosomal protein bL25 family. CTC subfamily. As to quaternary structure, part of the 50S ribosomal subunit; part of the 5S rRNA/L5/L18/L25 subcomplex. Contacts the 5S rRNA. Binds to the 5S rRNA independently of L5 and L18.

Its function is as follows. This is one of the proteins that binds to the 5S RNA in the ribosome where it forms part of the central protuberance. The polypeptide is Large ribosomal subunit protein bL25 (Cupriavidus necator (strain ATCC 17699 / DSM 428 / KCTC 22496 / NCIMB 10442 / H16 / Stanier 337) (Ralstonia eutropha)).